The sequence spans 209 residues: Small ribosomal subunit protein uS4 (209 aa).

The region spanning 98–164 (RRLDNVVYRL…LPVKNAIELN (67 aa)) is the S4 RNA-binding domain.

The protein belongs to the universal ribosomal protein uS4 family. In terms of assembly, part of the 30S ribosomal subunit. Contacts protein S5. The interaction surface between S4 and S5 is involved in control of translational fidelity.

Functionally, one of the primary rRNA binding proteins, it binds directly to 16S rRNA where it nucleates assembly of the body of the 30S subunit. In terms of biological role, with S5 and S12 plays an important role in translational accuracy. This chain is Small ribosomal subunit protein uS4, found in Thermosipho africanus (strain TCF52B).